The primary structure comprises 340 residues: L-lysine 2,3-aminomutase (340 aa).

The Radical SAM core domain maps to arginine 106–lysine 321. [4Fe-4S] cluster contacts are provided by cysteine 120, cysteine 124, and cysteine 127. N6-(pyridoxal phosphate)lysine is present on lysine 332.

This sequence belongs to the radical SAM superfamily. KamA family. The cofactor is [4Fe-4S] cluster. Requires pyridoxal 5'-phosphate as cofactor.

The enzyme catalyses L-lysine = D-beta-lysine. In terms of biological role, with EpmA is involved in the beta-lysylation step of the post-translational modification of translation elongation factor P (EF-P) on 'Lys-34'. EpmB appears to act before EpmA. Displays lysine 2,3-aminomutase activity, producing (R)-beta-lysine from (S)-alpha-lysine (L-lysine). The polypeptide is L-lysine 2,3-aminomutase (epmB) (Buchnera aphidicola subsp. Baizongia pistaciae (strain Bp)).